A 968-amino-acid chain; its full sequence is Polycystin-2 (968 aa).

The segment covering 1-11 (MVNSSRVQPQQ) has biased composition (polar residues). 2 disordered regions span residues 1–28 (MVNS…DPGR) and 58–181 (RIRQ…LPLE). At 1–219 (MVNSSRVQPQ…STNREKYLKS (219 aa)) the chain is on the cytoplasmic side. Low complexity predominate over residues 62–83 (AAARDPPAGAAASPSPPLSSCS). Phosphoserine is present on residues serine 76 and serine 80. The segment covering 95 to 107 (EAEEEEEEVEGEE) has biased composition (acidic residues). Residues 123–139 (RRSAASSAVSSVGARSR) are compositionally biased toward low complexity. Position 137 is an omega-N-methylarginine (arginine 137). Residues 220-241 (VLRELVTYLLFLIVLCILTYGM) traverse the membrane as a helical segment. Over 242–468 (MSSNVYYYTR…PLKLIRYVTT (227 aa)) the chain is Extracellular. Asparagine 299 and asparagine 305 each carry an N-linked (GlcNAc...) asparagine glycan. A glycan (N-linked (GlcNAc...) (complex) asparagine) is linked at asparagine 328. Residues cysteine 331 and cysteine 344 are joined by a disulfide bond. Asparagine 362 and asparagine 375 each carry an N-linked (GlcNAc...) asparagine glycan. Residues 469-489 (FDFFLAACEIIFCFFIFYYVV) traverse the membrane as a helical segment. The Cytoplasmic segment spans residues 490–505 (EEILEIRIHKLHYFRS). A helical membrane pass occupies residues 506-526 (FWNCLDVVIVVLSVVAIGINI). Over 527–552 (YRTSNVEVLLQFLEDQNTFPNFEHLA) the chain is Extracellular. Residues 553 to 573 (YWQIQFNNIAAVTVFFVWIKL) form a helical membrane-spanning segment. Cholesterol is bound at residue glutamine 557. The Cytoplasmic portion of the chain corresponds to 574–597 (FKFINFNRTMSQLSTTMSRCAKDL). Residues 598–619 (FGFAIMFFIIFLAYAQLAYLVF) form a helical membrane-spanning segment. The Extracellular portion of the chain corresponds to 620–631 (GTQVDDFSTFQE). An intramembrane region (pore-forming) is located at residues 632 to 646 (CIFTQFRIILGDINF). Residue leucine 641 participates in Ca(2+) binding. The Selectivity filter motif lies at 641 to 643 (LGD). The Extracellular portion of the chain corresponds to 647–654 (AEIEEANR). A helical membrane pass occupies residues 655-675 (VLGPIYFTTFVFFMFFILLNM). Topologically, residues 676-968 (FLAIINDTYS…GGNGSSNVHV (293 aa)) are cytoplasmic. Positions 750-785 (HTDAEIEAIFTKYDQDGDQELTEHEHQQMRDDLEKE) constitute an EF-hand domain. Ca(2+) is bound by residues aspartate 763, aspartate 765, aspartate 767, glutamate 769, and glutamate 774. Residues 764-831 (QDGDQELTEH…HSSRRRGSIS (68 aa)) form a disordered region. Basic and acidic residues predominate over residues 770 to 795 (LTEHEHQQMRDDLEKEREDLDLDHSS). The segment covering 796–807 (LPRPMSSRSFPR) has biased composition (low complexity). Phosphoserine is present on residues serine 801, serine 808, serine 812, and serine 829. The interval 803 to 822 (RSFPRSLDDSEEDDDEDSGH) is linker. The interval 810 to 821 (DDSEEDDDEDSG) is important for interaction with PACS1 and PACS2. A coiled-coil region spans residues 833 to 872 (GVSYEEFQVLVRRVDRMEHSIGSIVSKIDAVIVKLEIMER). The tract at residues 917–968 (ESDDAASQISHGLGTPVGLNGQPRPRSSRPSSSQSTEGMEGAGGNGSSNVHV) is disordered. The span at 938–951 (QPRPRSSRPSSSQS) shows a compositional bias: low complexity.

The protein belongs to the polycystin family. Homotetramer. Component of the heterotetrameric polycystin channel complex with PKD1; the tetramer contains one PKD1 chain and three PKD2 chains. Isoform 1 interacts with PKD1 while isoform 3 does not. Interacts with PKD1L1; probably forms a Ca(2+) channel. Interacts with CD2AP. Interacts with HAX1. Interacts with NEK8. Part of a complex containing AKAP5, ADCY5, ADCY6 and PDE4C. Interacts (via C-terminus) with TRPV4 (via C-terminus). Interacts (via C-terminal acidic region) with PACS1 and PACS2; these interactions retain the protein in the endoplasmic reticulum and prevent trafficking to the cell membrane. Interacts with TMEM33. Form a heterotetramer with TRPC1 with a 2:2 stoichiometry; has distinct channel properties separate from PKD2 or TRPC1 homomers alone. Interacts with TMEM120A; TMEM120A inhibits PKD2 channel activity through the physical association of PKD2 with TMEM120A. Interacts (via N-terminus) with RYR2; regulates RYR2 channel activity. Phosphorylated. Phosphorylation is important for protein function; a mutant that lacks the N-terminal phosphorylation sites cannot complement a zebrafish pkd2-deficient mutant. PKD-mediated phosphorylation at the C-terminus regulates its function in the release of Ca(2+) stores from the endoplasmic reticulum. Phosphorylation at Ser-812 regulates PKD2 trafficking. Phosphorylation at Ser-76 is required for PKD2 trafficking to or retention at the lateral plasma membrane. Phosphorylation at Ser-801, Ser-812 and Ser-829 regulates PKD2 channel activity. Post-translationally, N-glycosylated. The four subunits in a tetramer probably differ in the extent of glycosylation; simultaneous glycosylation of all experimentally validated sites would probably create steric hindrance. Thus, glycosylation at Asn-305 is not compatible with glycosylation at Asn-328; only one of these two residues is glycosylated at a given time. In terms of processing, sumoylated by SUMO1; sumoylation regulates PKD2 membrane recycling and is necessary for intravascular pressure-induced arterial contractility. Detected in fetal and adult kidney. Detected at the thick ascending limb of the loop of Henle, at distal tubules, including the distal convoluted tubule and cortical collecting tubules, with weak staining of the collecting duct. Detected on placenta syncytiotrophoblasts (at protein level). Strongly expressed in ovary, fetal and adult kidney, testis, and small intestine. Not detected in peripheral leukocytes.

Its subcellular location is the cell projection. It localises to the cilium membrane. It is found in the endoplasmic reticulum membrane. The protein localises to the cell membrane. The protein resides in the basolateral cell membrane. Its subcellular location is the cytoplasmic vesicle membrane. It localises to the golgi apparatus. It is found in the vesicle. The protein localises to the secreted. The protein resides in the extracellular exosome. It carries out the reaction K(+)(in) = K(+)(out). The enzyme catalyses Na(+)(in) = Na(+)(out). It catalyses the reaction Ca(2+)(in) = Ca(2+)(out). Its activity is regulated as follows. Channel activity is regulated by phosphorylation. Channel activity is regulated by intracellular Ca(2+). At the endoplasmic reticulum membrane (ER), TMEM33 enhances its channel activity. TMEM120A inhibits the channel activity of PKD2, and mediates mechanosensitivity of the PKD2-TMEM120A channel complex. PKD1/PKD2 complex on the plasma membrane is activated by PKD1 N-terminus. Functionally, forms a nonselective cation channel. Can function as a homotetrameric ion channel or can form heteromer with PKD1. Displays distinct function depending on its subcellular localization and regulation by its binding partners. In primary cilium functions as a cation channel, with a preference for monovalent cations over divalent cations that allows K(+), Na(+) and Ca(2+) influx, with low selectivity for Ca(2+). Involved in fluid-flow mechanosensation by the primary cilium in renal epithelium. In the endoplasmic reticulum, likely functions as a K(+) channel to facilitate Ca(2+) release. The heterotetrameric PKD1/PKD2 channel has higher Ca(2+) permeability than homomeric PKD2 channel and acts as a primarily Ca(2+)-permeable channel. Interacts with and acts as a regulator of a number of other channels, such as TRPV4, TRPC1, IP3R, RYR2, ultimately further affecting intracellular signaling, to modulate intracellular Ca(2+) signaling. Together with TRPV4, forms mechano- and thermosensitive channels in cilium. In cardiomyocytes, PKD2 modulates Ca(2+) release from stimulated RYR2 receptors through direct association. Also involved in left-right axis specification via its role in sensing nodal flow; forms a complex with PKD1L1 in cilia to facilitate flow detection in left-right patterning. Acts as a regulator of cilium length together with PKD1. Mediates systemic blood pressure and contributes to the myogenic response in cerebral arteries though vasoconstriction. This is Polycystin-2 from Homo sapiens (Human).